The following is a 148-amino-acid chain: Ubiquitin-conjugating enzyme E2 4 (148 aa).

The tract at residues 1 to 22 (MSSSKRIAKELSDLERDPPTSC) is disordered. Residues 2–148 (SSSKRIAKEL…AREWTKKYAV (147 aa)) enclose the UBC core domain. The span at 7–18 (IAKELSDLERDP) shows a compositional bias: basic and acidic residues. The residue at position 12 (Ser-12) is a Phosphoserine. Cys-86 acts as the Glycyl thioester intermediate in catalysis. Residue Lys-91 forms a Glycyl lysine isopeptide (Lys-Gly) (interchain with G-Cter in ubiquitin) linkage.

This sequence belongs to the ubiquitin-conjugating enzyme family. In terms of assembly, interacts with TUL1. In terms of processing, the N-terminus is blocked.

The enzyme catalyses S-ubiquitinyl-[E1 ubiquitin-activating enzyme]-L-cysteine + [E2 ubiquitin-conjugating enzyme]-L-cysteine = [E1 ubiquitin-activating enzyme]-L-cysteine + S-ubiquitinyl-[E2 ubiquitin-conjugating enzyme]-L-cysteine.. It participates in protein modification; protein ubiquitination. E2 ubiquitin-conjugating enzyme that catalyzes the covalent attachment of ubiquitin to other proteins. Mediates the selective degradation of short-lived and abnormal proteins. Mediates ubiquitination of PEX5. This is Ubiquitin-conjugating enzyme E2 4 from Saccharomyces cerevisiae (strain ATCC 204508 / S288c) (Baker's yeast).